A 207-amino-acid chain; its full sequence is Small ribosomal subunit protein uS4 (207 aa).

The tract at residues 31–55 (KCKLDSKPGQHGRTSGARTSDYGTQ) is disordered. Residues 42-53 (GRTSGARTSDYG) are compositionally biased toward polar residues. The S4 RNA-binding domain maps to 97–160 (SRLDNVVYRM…KKQARIVEAL (64 aa)).

The protein belongs to the universal ribosomal protein uS4 family. In terms of assembly, part of the 30S ribosomal subunit. Contacts protein S5. The interaction surface between S4 and S5 is involved in control of translational fidelity.

One of the primary rRNA binding proteins, it binds directly to 16S rRNA where it nucleates assembly of the body of the 30S subunit. Functionally, with S5 and S12 plays an important role in translational accuracy. The sequence is that of Small ribosomal subunit protein uS4 from Burkholderia ambifaria (strain MC40-6).